A 353-amino-acid chain; its full sequence is Guanine nucleotide-binding protein G(q) subunit alpha (353 aa).

S-palmitoyl cysteine attachment occurs at residues Cys-3 and Cys-4. Positions 32 to 353 (RELKLLLLGT…QLNLKEYNLV (322 aa)) constitute a G-alpha domain. The tract at residues 35 to 48 (KLLLLGTGESGKST) is G1 motif. GTP contacts are provided by residues 40-47 (GTGESGKS), 174-180 (LRVRVPT), 199-203 (DVGGQ), 268-271 (NKKD), and Ala-325. Mg(2+) is bound by residues Ser-47 and Thr-180. Residues 172-180 (DILRVRVPT) form a G2 motif region. The G3 motif stretch occupies residues 195–204 (FRMVDVGGQR). A G4 motif region spans residues 264–271 (ILFLNKKD). Residues 323–328 (TCATDT) form a G5 motif region.

The protein belongs to the G-alpha family. G(q) subfamily. As to quaternary structure, g proteins are composed of 3 units; alpha, beta and gamma. The alpha chain contains the guanine nucleotide binding site.

Guanine nucleotide-binding proteins (G proteins) are involved as modulators or transducers in various transmembrane signaling systems. This chain is Guanine nucleotide-binding protein G(q) subunit alpha (SCGQA), found in Mizuhopecten yessoensis (Japanese scallop).